A 342-amino-acid chain; its full sequence is N-acetyl-gamma-glutamyl-phosphate reductase (342 aa).

Cysteine 149 is an active-site residue.

The protein belongs to the NAGSA dehydrogenase family. Type 1 subfamily.

It is found in the cytoplasm. It catalyses the reaction N-acetyl-L-glutamate 5-semialdehyde + phosphate + NADP(+) = N-acetyl-L-glutamyl 5-phosphate + NADPH + H(+). The protein operates within amino-acid biosynthesis; L-arginine biosynthesis; N(2)-acetyl-L-ornithine from L-glutamate: step 3/4. Catalyzes the NADPH-dependent reduction of N-acetyl-5-glutamyl phosphate to yield N-acetyl-L-glutamate 5-semialdehyde. In Laribacter hongkongensis (strain HLHK9), this protein is N-acetyl-gamma-glutamyl-phosphate reductase.